We begin with the raw amino-acid sequence, 97 residues long: Defective intron-associated endonuclease 3 (97 aa).

In terms of biological role, this endonuclease is specific to the nrdB gene splice junction and is involved in intron homing. This is Defective intron-associated endonuclease 3 (ITEVIIIR) from Escherichia coli (Bacteriophage T4).